We begin with the raw amino-acid sequence, 540 residues long: 2-isopropylmalate synthase (540 aa).

In terms of domain architecture, Pyruvate carboxyltransferase spans 8–273 (VLIFDTTLRD…FFGRDQDSPT (266 aa)). Mn(2+) is bound by residues aspartate 17, histidine 208, histidine 210, and asparagine 244. Residues 408-540 (QLQLVQVSCG…AVVLDARPTL (133 aa)) form a regulatory domain region.

Belongs to the alpha-IPM synthase/homocitrate synthase family. LeuA type 1 subfamily. As to quaternary structure, homodimer. It depends on Mn(2+) as a cofactor.

The protein resides in the cytoplasm. The catalysed reaction is 3-methyl-2-oxobutanoate + acetyl-CoA + H2O = (2S)-2-isopropylmalate + CoA + H(+). The protein operates within amino-acid biosynthesis; L-leucine biosynthesis; L-leucine from 3-methyl-2-oxobutanoate: step 1/4. Its function is as follows. Catalyzes the condensation of the acetyl group of acetyl-CoA with 3-methyl-2-oxobutanoate (2-ketoisovalerate) to form 3-carboxy-3-hydroxy-4-methylpentanoate (2-isopropylmalate). This chain is 2-isopropylmalate synthase, found in Parasynechococcus marenigrum (strain WH8102).